A 570-amino-acid polypeptide reads, in one-letter code: Sulfite reductase [NADPH] hemoprotein beta-component (570 aa).

[4Fe-4S] cluster-binding residues include Cys434, Cys440, Cys479, and Cys483. Position 483 (Cys483) interacts with siroheme.

It belongs to the nitrite and sulfite reductase 4Fe-4S domain family. In terms of assembly, alpha(8)-beta(8). The alpha component is a flavoprotein, the beta component is a hemoprotein. It depends on siroheme as a cofactor. The cofactor is [4Fe-4S] cluster.

It catalyses the reaction hydrogen sulfide + 3 NADP(+) + 3 H2O = sulfite + 3 NADPH + 4 H(+). Its pathway is sulfur metabolism; hydrogen sulfide biosynthesis; hydrogen sulfide from sulfite (NADPH route): step 1/1. Component of the sulfite reductase complex that catalyzes the 6-electron reduction of sulfite to sulfide. This is one of several activities required for the biosynthesis of L-cysteine from sulfate. This Salmonella typhimurium (strain LT2 / SGSC1412 / ATCC 700720) protein is Sulfite reductase [NADPH] hemoprotein beta-component (cysI).